The chain runs to 160 residues: Ribosome maturation factor RimP (160 aa).

This sequence belongs to the RimP family.

Its subcellular location is the cytoplasm. In terms of biological role, required for maturation of 30S ribosomal subunits. In Citrifermentans bemidjiense (strain ATCC BAA-1014 / DSM 16622 / JCM 12645 / Bem) (Geobacter bemidjiensis), this protein is Ribosome maturation factor RimP.